The chain runs to 187 residues: BLOC-1-related complex subunit 8 homolog (187 aa).

The disordered stretch occupies residues 165–187 (QSQHETANDTRQGYNDDANNDQD).

The protein belongs to the BORCS8 family.

The protein localises to the lysosome membrane. Functionally, may participate in the coupling of lysosomes to microtubule plus-end-directed kinesin motor. This is BLOC-1-related complex subunit 8 homolog from Nematostella vectensis (Starlet sea anemone).